Reading from the N-terminus, the 636-residue chain is Multicopper oxidase CTB12 (636 aa).

An N-terminal signal peptide occupies residues 1 to 23; it reads MWSVRLYPLALTLLFQCVSPAAA. The region spanning 62-168 is the Plastocyanin-like 1 domain; that stretch reads AGIGFREAIF…LYGAVVIAPD (107 aa). H104 and H106 together coordinate Cu cation. A glycan (N-linked (GlcNAc...) asparagine) is linked at N136. 2 residues coordinate Cu cation: H148 and H150. N304 carries N-linked (GlcNAc...) asparagine glycosylation. The 64-residue stretch at 318 to 381 folds into the Plastocyanin-like 2 domain; it reads LTFVNPGGLY…QEKARHVVRV (64 aa). N472 is a glycosylation site (N-linked (GlcNAc...) asparagine). The Plastocyanin-like 3 domain maps to 486 to 613; sequence NVEDVPATEL…GGMGMVVLDG (128 aa). 3 residues coordinate Cu cation: H519, H522, and H524. An N-linked (GlcNAc...) asparagine glycan is attached at N576. Cu cation is bound by residues H595, C596, H597, and H601.

This sequence belongs to the multicopper oxidase family.

It participates in mycotoxin biosynthesis. Functionally, multicopper oxidase; part of the gene cluster that mediates the biosynthesis of cercosporin, a light-activated, non-host-selective toxin. The perylenequinone chromophore of cercosporin absorbs light energy to attain an electronically-activated triplet state and produces active oxygen species such as the hydroxyl radical, superoxide, hydrogen peroxide or singlet oxygen upon reaction with oxygen molecules. These reactive oxygen species cause damage to various cellular components including lipids, proteins and nucleic acids. The first step of cercosporin biosynthesis is performed by the polyketide synthase CTB1 which catalyzes the formation of nor-toralactone. The starter unit acyltransferase (SAT) domain of CTB1 initiates polyketide extension by the selective utilization of acetyl-CoA, which is elongated to the heptaketide in the beta-ketoacyl synthase (KS) domain by successive condensations with six malonyl units introduced by the malonyl acyltransferase (MAT) domain. The product template (PT) domain catalyzes C4-C9 and C2-C11 aldol cyclizations and dehydrations to a trihydroxynaphthalene, which is thought to be delivered to the thioesterase (TE) domain for product release. The bifunctional enzyme CTB3 then methylates nor-toralactone to toralactone before conducting an unusual oxidative aromatic ring opening. The O-methyltransferase CTB2 further methylates the nascent OH-6 of the CBT3 product, blocking further oxidation at this site before the reductase CTB6 reduces the 2-oxopropyl ketone at position C7, giving naphthalene. The FAD-dependent monooxygenase CTB5 in concert with the multicopper oxidase CTB12 are responsible for homodimerization of naphthalene with CTB7 installing the dioxepine moiety, finally producing cercosporin. The fasciclin domain-containing protein CTB11 might act with CTB5 and CTB12 whereas the roles of CTB9 and CTB10 have still to be elucidated. The polypeptide is Multicopper oxidase CTB12 (Cercospora beticola (Sugarbeet leaf spot fungus)).